The chain runs to 312 residues: MAVSAIFSQDSNSKRLLIAFAITTLFMVTEAIGGWLSGSLALLADTGHMLTDSAALFIALMAVHFSQRKPDPRHTFGYLRLTTLAAFVNAAALLLIVILIVWEAVHRFFSPHEVMGTPMLIIAIAGLLANIFCFWILHKGEEEKNINVRAAALHVLSDLLGSVGAMIAAIVILTTGWTPIDPILSVLVSVLILRNAWRLLKESFHELLEGAPQEIDINKLRKDLCTNIYEVRNIHHVHLWQVGEQRLMTLHAQVIPPLDHDALLQRIQDYLLHHYRISHATVQMEYQHCGTPDCGINQAAPADGHHRHHHHE.

The next 6 helical transmembrane spans lie at 16–36, 40–60, 81–101, 117–137, 153–173, and 177–197; these read LLIA…GGWL, LALL…FIAL, LTTL…ILIV, TPML…FWIL, LHVL…IVIL, and WTPI…RNAW.

It belongs to the cation diffusion facilitator (CDF) transporter (TC 2.A.4) family. SLC30A subfamily.

Its subcellular location is the cell inner membrane. Functionally, involved in zinc efflux across the cytoplasmic membrane, thus reducing zinc accumulation in the cytoplasm and rendering bacteria more resistant to zinc. It may contribute to zinc homeostasis at low concentrations of zinc. The polypeptide is Zinc transporter ZitB (Yersinia pseudotuberculosis serotype I (strain IP32953)).